The chain runs to 187 residues: Interferon beta (187 aa).

The signal sequence occupies residues 1–21 (MTSRSLLPFVLSLLLPRIIMA). At tyrosine 24 the chain carries Phosphotyrosine. Cysteine 53 and cysteine 162 are oxidised to a cystine. Asparagine 76, asparagine 95, asparagine 132, and asparagine 158 each carry an N-linked (GlcNAc...) asparagine glycan.

Belongs to the alpha/beta interferon family. In terms of assembly, monomer.

Its subcellular location is the secreted. In terms of biological role, type I interferon cytokine that plays a key role in the innate immune response to infection, developing tumors and other inflammatory stimuli. Signals via binding to high-affinity (IFNAR2) and low-affinity (IFNAR1) heterodimeric receptor, activating the canonical Jak-STAT signaling pathway resulting in transcriptional activation or repression of interferon-regulated genes that encode the effectors of the interferon response, such as antiviral proteins, regulators of cell proliferation and differentiation, and immunoregulatory proteins. Signals mostly via binding to a IFNAR1-IFNAR2 heterodimeric receptor, but can also function with IFNAR1 alone and independently of Jak-STAT pathways. Elicits a wide variety of responses, including antiviral and antibacterial activities, and can regulate the development of B-cells, myelopoiesis and lipopolysaccharide (LPS)-inducible production of tumor necrosis factor. Plays a role in neuronal homeostasis by regulating dopamine turnover and protecting dopaminergic neurons: acts by promoting neuronal autophagy and alpha-synuclein clearance, thereby preventing dopaminergic neuron loss. IFNB1 is more potent than interferon-alpha (IFN-alpha) in inducing the apoptotic and antiproliferative pathways required for control of tumor cell growth. In Tachyglossus aculeatus aculeatus (Southeast Australian short-beaked echidna), this protein is Interferon beta (IFNB1).